The chain runs to 970 residues: N-alpha-acetyltransferase 25, NatB auxiliary subunit (970 aa).

TPR repeat units follow at residues 11–44 (NDRR…HRDL), 45–78 (HCAK…EPTD), 79–112 (DNSL…VPNS), and 114–146 (EYHS…VPKN).

The protein belongs to the MDM20/NAA25 family. In terms of assembly, component of the N-terminal acetyltransferase B (NatB) complex which is composed of NAA20 and NAA25.

The protein localises to the cytoplasm. In terms of biological role, non-catalytic subunit of the NatB complex which catalyzes acetylation of the N-terminal methionine residues of peptides beginning with Met-Asp, Met-Glu, Met-Asn and Met-Gln. May play a role in normal cell-cycle progression. The polypeptide is N-alpha-acetyltransferase 25, NatB auxiliary subunit (Naa25) (Rattus norvegicus (Rat)).